The primary structure comprises 697 residues: Probable translocation protein y4yR (697 aa).

Transmembrane regions (helical) follow at residues 20-40 (VALM…VMAV), 42-62 (ALIG…LYVS), 67-87 (FSSL…LTVA), 107-127 (SFVI…VTMV), 200-220 (SIAG…IGLL), 235-255 (LLTI…SITA), 293-313 (VAMG…AAVF), and 372-392 (IARI…PIPV). Positions 675-697 (IRLPPSNGTSGEPRSIRPSATTG) are disordered. The segment covering 680–697 (SNGTSGEPRSIRPSATTG) has biased composition (polar residues).

This sequence belongs to the FHIPEP (flagella/HR/invasion proteins export pore) family.

It localises to the cell inner membrane. Could be involved in the secretion of an unknown factor. In Sinorhizobium fredii (strain NBRC 101917 / NGR234), this protein is Probable translocation protein y4yR.